A 194-amino-acid polypeptide reads, in one-letter code: HTH-type transcriptional regulator BetI (194 aa).

The region spanning 8–68 (EIRRAQLIDA…ATMRHVLRDL (61 aa)) is the HTH tetR-type domain. The segment at residues 31-50 (TLASVAQRANISTGIVSHYF) is a DNA-binding region (H-T-H motif).

Its pathway is amine and polyamine biosynthesis; betaine biosynthesis via choline pathway [regulation]. Its function is as follows. Repressor involved in the biosynthesis of the osmoprotectant glycine betaine. It represses transcription of the choline transporter BetT and the genes of BetAB involved in the synthesis of glycine betaine. This chain is HTH-type transcriptional regulator BetI, found in Burkholderia cenocepacia (strain ATCC BAA-245 / DSM 16553 / LMG 16656 / NCTC 13227 / J2315 / CF5610) (Burkholderia cepacia (strain J2315)).